Consider the following 156-residue polypeptide: Ribosomal RNA large subunit methyltransferase H (156 aa).

S-adenosyl-L-methionine contacts are provided by residues Leu-73, Gly-104, and 123–128 (LSSLTL).

It belongs to the RNA methyltransferase RlmH family. As to quaternary structure, homodimer.

It localises to the cytoplasm. It catalyses the reaction pseudouridine(1915) in 23S rRNA + S-adenosyl-L-methionine = N(3)-methylpseudouridine(1915) in 23S rRNA + S-adenosyl-L-homocysteine + H(+). Specifically methylates the pseudouridine at position 1915 (m3Psi1915) in 23S rRNA. This is Ribosomal RNA large subunit methyltransferase H from Neisseria gonorrhoeae (strain NCCP11945).